The sequence spans 170 residues: J domain-containing protein (170 aa).

The 66-residue stretch at 17–82 (DYYALLGCDE…SKRALYDKWR (66 aa)) folds into the J domain. The tract at residues 101-170 (QQSMHWSKPN…VISKFRNYEI (70 aa)) is disordered. Positions 110-120 (NTKDRMLEGEP) are enriched in basic and acidic residues. 2 stretches are compositionally biased toward low complexity: residues 121-135 (GKPS…SNPG) and 142-153 (GGAALWGRWGAG).

This chain is J domain-containing protein (jdp), found in Manduca sexta (Tobacco hawkmoth).